We begin with the raw amino-acid sequence, 508 residues long: H/ACA ribonucleoprotein complex subunit 4 (508 aa).

The segment at 1-29 (MADVEVRKEKKKKKIKEEPLDGDDIGTLQ) is disordered. The active-site Nucleophile is the D123. One can recognise a PUA domain in the interval 294–369 (HKRIIMKDSS…VVAKIKRVIM (76 aa)). Residues 423–508 (AAQEVSPTNG…KDRDRDEAQE (86 aa)) are disordered. S442 carries the phosphoserine modification. Residues 442–457 (STSSVEETAAAAVSEE) show a composition bias toward low complexity. T443 carries the post-translational modification Phosphothreonine. 2 positions are modified to phosphoserine: S444 and S445. Phosphothreonine is present on T449. At S455 the chain carries Phosphoserine. At T458 the chain carries Phosphothreonine. The segment covering 475-485 (EAPEAAEEEAE) has biased composition (acidic residues). Residues 499–508 (KDRDRDEAQE) are compositionally biased toward basic and acidic residues.

It belongs to the pseudouridine synthase TruB family. Component of the box H/ACA small nucleolar ribonucleoprotein (H/ACA snoRNP) complex consisting of Nop60B, Gar1, NPH2 and Nop10, and associated with H/ACA-type snoRNAs. In terms of tissue distribution, expressed at higher levels in females than in males. As to expression, expressed almost exclusively in females with high levels of expression in the ovary.

The protein localises to the nucleus. It is found in the nucleolus. It catalyses the reaction a uridine in RNA = a pseudouridine in RNA. In terms of biological role, catalytic subunit of the box H/ACA small nucleolar ribonucleoprotein (H/ACA snoRNP) complex, which catalyzes pseudouridylation of rRNA. This involves the isomerization of uridine such that the ribose is subsequently attached to C5, instead of the normal N1. Pseudouridine ('psi') residues may serve to stabilize the conformation of rRNAs. Required for ribosome biogenesis; plays a central role in ribosomal RNA processing. H/ACA snoRNP complex-dependent ribosome biogenesis is important in female germline cell differentiation during oogenesis. Essential for viability and female fertility. Required for maintenance of the germline stem cell lineage during spermatogenesis. This is H/ACA ribonucleoprotein complex subunit 4 from Drosophila melanogaster (Fruit fly).